A 732-amino-acid polypeptide reads, in one-letter code: MAEHPDLFSAPAQEAPEDLGLRAAALRAQLHQWAHQYYVLDAPTVPDAEYDRVFQALQALETAHPELVTPDSPTQRVIGAVMEGLTPVRHTVPMLSIRTETDTEASGAETFDARVRRELKLAPDAPPVEYVAEPKFDGLAMSLRYENGRLVQAATRGDGEVGEDVTHNIRTIRQIPLTLPTGGRYGVPPVLEVRGEVYMRRADFDRLNERQREAGGKTFVNPRNAAAGAVRQLDSGIAAQRPLSFFAYGLGDITPAAEGGPDFATHFDMLRQLKAWGFPVAAQVRTARGASELVAFHQEVGASRDQLPYDIDGVVYKVNSLALQRQLGFVTREPRWAVAHKYPAQEMVTRVEGIDVQVGRTGKLTPVARLAPVFVGGVTVTNATLHNLFEIRKKGVRVGDQVIVRRAGDVIPEVVGTVPAALLPVAGALQGSDALADAASGADGTAPGADAARAAPRSPYVPNFRMPRQCPICGSTVVREKGEANHRCTGGLFCPAQRKEALLHFAQRRAMDIEGLGEKLVDQLVEGQVIRTLPDLYRLGLTALSSLDRMAEKSAQNVLAALEKSKHTTLPRFLFGLGIRHVGEATAKDLARHFGGLDAIMDASVEQLLEVNDVGPVVAEAIHTFFAQPHNREVVEQLRACGVTWKEGPPAERATLPLAGKTFVLTGTLPTLSREDAKDRLEAAGAKVAGSVSRKTHYVVAGEEAGSKLAKAQELGVPVLDEAGMLALLQGR.

Residues 47-51, 96-97, and glutamate 133 contribute to the NAD(+) site; these read DAEYD and SI. Lysine 135 functions as the N6-AMP-lysine intermediate in the catalytic mechanism. 4 residues coordinate NAD(+): arginine 156, glutamate 196, lysine 317, and lysine 341. Zn(2+)-binding residues include cysteine 470, cysteine 473, cysteine 488, and cysteine 494. The BRCT domain occupies 653–732; it reads RATLPLAGKT…AGMLALLQGR (80 aa).

The protein belongs to the NAD-dependent DNA ligase family. LigA subfamily. Requires Mg(2+) as cofactor. Mn(2+) serves as cofactor.

It catalyses the reaction NAD(+) + (deoxyribonucleotide)n-3'-hydroxyl + 5'-phospho-(deoxyribonucleotide)m = (deoxyribonucleotide)n+m + AMP + beta-nicotinamide D-nucleotide.. DNA ligase that catalyzes the formation of phosphodiester linkages between 5'-phosphoryl and 3'-hydroxyl groups in double-stranded DNA using NAD as a coenzyme and as the energy source for the reaction. It is essential for DNA replication and repair of damaged DNA. The polypeptide is DNA ligase (Paracidovorax citrulli (strain AAC00-1) (Acidovorax citrulli)).